Consider the following 379-residue polypeptide: Ribosomal RNA large subunit methyltransferase G (379 aa).

This sequence belongs to the methyltransferase superfamily. RlmG family.

It localises to the cytoplasm. The catalysed reaction is guanosine(1835) in 23S rRNA + S-adenosyl-L-methionine = N(2)-methylguanosine(1835) in 23S rRNA + S-adenosyl-L-homocysteine + H(+). Its function is as follows. Specifically methylates the guanine in position 1835 (m2G1835) of 23S rRNA. This is Ribosomal RNA large subunit methyltransferase G from Serratia proteamaculans (strain 568).